The sequence spans 142 residues: Large ribosomal subunit protein uL23 (142 aa).

The protein belongs to the universal ribosomal protein uL23 family. As to quaternary structure, component of the large ribosomal subunit. Mature ribosomes consist of a small (40S) and a large (60S) subunit. The 40S subunit contains about 32 different proteins and 1 molecule of RNA (18S). The 60S subunit contains 45 different proteins and 3 molecules of RNA (25S, 5.8S and 5S).

Its subcellular location is the cytoplasm. Its function is as follows. Component of the ribosome, a large ribonucleoprotein complex responsible for the synthesis of proteins in the cell. The small ribosomal subunit (SSU) binds messenger RNAs (mRNAs) and translates the encoded message by selecting cognate aminoacyl-transfer RNA (tRNA) molecules. The large subunit (LSU) contains the ribosomal catalytic site termed the peptidyl transferase center (PTC), which catalyzes the formation of peptide bonds, thereby polymerizing the amino acids delivered by tRNAs into a polypeptide chain. The nascent polypeptides leave the ribosome through a tunnel in the LSU and interact with protein factors that function in enzymatic processing, targeting, and the membrane insertion of nascent chains at the exit of the ribosomal tunnel. RPL25 is a major component of the universal docking site for these factors at the polypeptide exit tunnel. The sequence is that of Large ribosomal subunit protein uL23 from Candida albicans (strain SC5314 / ATCC MYA-2876) (Yeast).